A 507-amino-acid chain; its full sequence is Putative pentatricopeptide repeat-containing protein At3g16710, mitochondrial (507 aa).

A mitochondrion-targeting transit peptide spans 1–48 (MRRSIATGFASIVKGFHLHSHRHRLQISNPRTAASLSLCGFCFWIRAF). PPR repeat units follow at residues 47–81 (AFSSYRKILRNGLHNLQFNDALDLFTRMVHSRPLP), 82–116 (SIIDFTRLLSVIAKMNRYDVVISLFEQMQILGIPP), 117–151 (LLCTCNIVMHCVCLSSQPCRASCFLGKMMKLGFEP), 152–186 (DLVTFTSLLNGYCHWNRIEDAIALFDQILGMGFKP), 187–221 (NVVTYTTLIRCLCKNRHLNHAVELFNQMGTNGSRP), 222–256 (NVVTYNALVTGLCEIGRWGDAAWLLRDMMKRRIEP), 257–291 (NVITFTALIDAFVKVGKLMEAKELYNVMIQMSVYP), 292–326 (DVFTYGSLINGLCMYGLLDEARQMFYLMERNGCYP), 327–361 (NEVIYTTLIHGFCKSKRVEDGMKIFYEMSQKGVVA), 362–396 (NTITYTVLIQGYCLVGRPDVAQEVFNQMSSRRAPP), 397–431 (DIRTYNVLLDGLCCNGKVEKALMIFEYMRKREMDI), 432–466 (NIVTYTIIIQGMCKLGKVEDAFDLFCSLFSKGMKP), and 467–501 (NVITYTTMISGFCRRGLIHEADSLFKKMKEDGFLP).

It belongs to the PPR family. P subfamily.

Its subcellular location is the mitochondrion. The sequence is that of Putative pentatricopeptide repeat-containing protein At3g16710, mitochondrial from Arabidopsis thaliana (Mouse-ear cress).